The sequence spans 267 residues: Fibroin light chain (267 aa).

The first 16 residues, Met1 to Ala16, serve as a signal peptide directing secretion. Ser19 is modified (N-acetylserine; in short form). Cys103 and Cys162 are oxidised to a cystine.

In terms of assembly, silk fibroin elementary unit consists in a disulfide-linked heavy and light chain and a p25 glycoprotein in molar ratios of 6:6:1. This results in a complex of approximately 2.3 MDa. Post-translationally, partially N-terminally processed to yield a short form which lacks the first two residues of the long form. In terms of processing, the interchain disulfide bridge is essential for the intracellular transport and secretion of fibroin. Produced exclusively in the posterior (PSG) section of silk glands, which are essentially modified salivary glands.

It localises to the secreted. Functionally, it is likely that the major role of L-chain is to prevent the retention of H-chain in ER by forming the disulfide linkage. The polypeptide is Fibroin light chain (FIBL) (Galleria mellonella (Greater wax moth)).